The sequence spans 199 residues: Imidazoleglycerol-phosphate dehydratase (199 aa).

Belongs to the imidazoleglycerol-phosphate dehydratase family.

Its subcellular location is the cytoplasm. It catalyses the reaction D-erythro-1-(imidazol-4-yl)glycerol 3-phosphate = 3-(imidazol-4-yl)-2-oxopropyl phosphate + H2O. The protein operates within amino-acid biosynthesis; L-histidine biosynthesis; L-histidine from 5-phospho-alpha-D-ribose 1-diphosphate: step 6/9. The chain is Imidazoleglycerol-phosphate dehydratase from Methylibium petroleiphilum (strain ATCC BAA-1232 / LMG 22953 / PM1).